The sequence spans 133 residues: Histone H2A (133 aa).

Residues 1-10 (MTGGKSGGKA) show a composition bias toward gly residues. The interval 1–25 (MTGGKSGGKASGSKSSQSRSSKAGL) is disordered. Lys-5 and Lys-9 each carry N6-acetyllysine. Positions 11-24 (SGSKSSQSRSSKAG) are enriched in low complexity. Gln-106 is modified (N5-methylglutamine). Ser-130 is subject to Phosphoserine. The short motif at 130-131 (SQ) is the [ST]-Q motif element.

Belongs to the histone H2A family. In terms of assembly, the nucleosome is a histone octamer containing two molecules each of H2A, H2B, H3 and H4 assembled in one H3-H4 heterotetramer and two H2A-H2B heterodimers. The octamer wraps approximately 147 bp of DNA. Post-translationally, phosphorylated to form H2AS128ph (gamma-H2A) in response to DNA double-strand breaks (DSBs) generated by exogenous genotoxic agents and by stalled replication forks. Phosphorylation is dependent on the DNA damage checkpoint kinases MEC1/ATR and TEL1/ATM, spreads on either side of a detected DSB site and may mark the surrounding chromatin for recruitment of proteins required for DNA damage signaling and repair. Gamma-H2A is removed from the DNA prior to the strand invasion-primer extension step of the repair process and subsequently dephosphorylated. Dephosphorylation is necessary for efficient recovery from the DNA damage checkpoint. Acetylated by ESA1 to form H2AK4ac and H2AK7ac.

It is found in the nucleus. It localises to the chromosome. Core component of nucleosome which plays a central role in DNA double strand break (DSB) repair. Nucleosomes wrap and compact DNA into chromatin, limiting DNA accessibility to the cellular machineries which require DNA as a template. Histones thereby play a central role in transcription regulation, DNA repair, DNA replication and chromosomal stability. DNA accessibility is regulated via a complex set of post-translational modifications of histones, also called histone code, and nucleosome remodeling. This Coccidioides immitis (strain RS) (Valley fever fungus) protein is Histone H2A (HTA1).